Here is a 374-residue protein sequence, read N- to C-terminus: uncharacterized protein (374 aa).

The chain crosses the membrane as a helical span at residues 27–49 (AISPILALLIVLGVTIVVGAVFY).

It localises to the membrane. This is an uncharacterized protein from Methanocaldococcus jannaschii (strain ATCC 43067 / DSM 2661 / JAL-1 / JCM 10045 / NBRC 100440) (Methanococcus jannaschii).